The primary structure comprises 349 residues: MSDFQREQRKNEHVEIAMAQSDAMYSDFDKMRFVHHSIPSINVNDIDLTSQTPDLTMAYPVYINAMTGGSEWTKNINEKLAVVARETGLAMAVGSTHAALRNPRMAETFTIARKMNPEGMIFSNVGADVPVEKALEAVELLEAQALQIHVNSPQELVMPEGNREFVTWLDNIASIVSRVSVPVIIKEVGFGMSKELMHDLQQIGVKYVDVSGKGGTNFVDIENERRANKDMDYLSSWGQSTVESLLETTAYQSEISVFASGGLRTPLDAIKSLALGAKATGMSRPFLNQVENNGIAHTVAYVESFIEHMKSIMTMLDAKNIDDLTQKQIVFSPEILSWIEQRSLNIHRG.

9-10 is a substrate binding site; that stretch reads RK. FMN-binding positions include 65-67, Ser-95, and Asn-124; that span reads AMT. 95–97 is a substrate binding site; it reads STH. Residue Gln-154 participates in substrate binding. Glu-155 is a Mg(2+) binding site. FMN is bound by residues Lys-186, Ser-211, Thr-216, 262–264, and 283–284; these read GLR and SR.

The protein belongs to the IPP isomerase type 2 family. In terms of assembly, homooctamer. Dimer of tetramers. Requires FMN as cofactor. It depends on NADPH as a cofactor. Mg(2+) is required as a cofactor.

The protein localises to the cytoplasm. It catalyses the reaction isopentenyl diphosphate = dimethylallyl diphosphate. Its function is as follows. Involved in the biosynthesis of isoprenoids. Catalyzes the 1,3-allylic rearrangement of the homoallylic substrate isopentenyl (IPP) to its allylic isomer, dimethylallyl diphosphate (DMAPP). In Staphylococcus aureus (strain MSSA476), this protein is Isopentenyl-diphosphate delta-isomerase.